We begin with the raw amino-acid sequence, 525 residues long: MNLVDEKDEKPTRWEKCVEFIMFHFRWVFVVPFLLPLSFLFNTVFDFRNRIVHAVNSAPNAHVRKVKHIQEQLKEWNDNGRKSKLVNARPGWLTMSFRFPLYKENATKIATDKLFDILDLDVEKMTVKAEPGVTMGQLSQYLISRGYTLPVLPELDDLTVGGLINGCGVESGSFKYGMFQHICTGYEVVMSDGELKNVYPDSAAKTEQAKQDNSLFFAIPWSQGTICFLVAATIKIIPCKKYVKLTYKKTETLSEMCEQLTEDSDRNSENVDFVEALMFNKEKGCIMLGEFSDGPDTHDEVVNPIGRWYKKWFYTHVEDLINKKHESIEYIPLRDYYHRHSKSIFWELRDIVPFGNNVLFRYLMAWMCPPKIAFLKATTPNVLRKLYDRSHVLQDMLVPLDKLEECIDLFHKEVEIYPMWLCPFYLKSQPGLMKLRNATHKMYVDVGAYGVTSKDGYHHERTTRRLESFVRSVNGFQMTYADIYMTRAEYAEMFDRTLYDWKRASCKCIDAFPDIYDKICRSGRR.

2 helical membrane-spanning segments follow: residues Trp27 to Phe47 and Ser214 to Ile234. Positions Phe47–Cys239 constitute an FAD-binding PCMH-type domain.

It belongs to the FAD-binding oxidoreductase/transferase type 4 family. FAD serves as cofactor.

The protein localises to the endoplasmic reticulum membrane. Its subcellular location is the golgi apparatus membrane. The catalysed reaction is cholesterol + NADP(+) = desmosterol + NADPH + H(+). It catalyses the reaction lanosterol + NADPH + H(+) = 24,25-dihydrolanosterol + NADP(+). The enzyme catalyses 5alpha-cholest-8-en-3beta-ol + NADP(+) = zymosterol + NADPH + H(+). The protein operates within steroid biosynthesis; cholesterol biosynthesis. In terms of biological role, catalyzes the reduction of the delta-24 double bond of sterol intermediates during cholesterol biosynthesis. The polypeptide is Delta(24)-sterol reductase homolog dhcr-24 (Caenorhabditis elegans).